The chain runs to 327 residues: WRKY transcription factor WRKY76 (327 aa).

Residues 56 to 76 adopt a coiled-coil conformation; it reads AKILEAKVTQMSEENRRLTEV. Residues 88 to 134 are disordered; that stretch reads LGLDGSASPPRPVSPLSGKKRSRESMETANSCDANSNRHQGGDADHA. Residues 106–112 carry the Nuclear localization signal motif; sequence KKRSRES. Residues 114–126 show a composition bias toward polar residues; it reads ETANSCDANSNRH. Residues 160–226 constitute a DNA-binding region (WRKY); that stretch reads DTSLVVKDGY…YEGEHNHPHP (67 aa).

It belongs to the WRKY group II-a family.

Its subcellular location is the nucleus. In terms of biological role, transcription repressor. Interacts specifically with the W box (5'-(T)TGAC[CT]-3'), a frequently occurring elicitor-responsive cis-acting element. Regulates, probably indirectly, the activation of defense-related genes during defense response. Modulates plant innate immunity against X.oryzae pv. oryzae (Xoo). This Oryza sativa subsp. indica (Rice) protein is WRKY transcription factor WRKY76.